The primary structure comprises 369 residues: Pulmonary surfactant-associated protein D (369 aa).

An N-terminal signal peptide occupies residues 1 to 20 (MLLLPLSVLLLLTQPWRSLG). An S-nitrosocysteine mark is found at Cys-35 and Cys-40. The tract at residues 41 to 215 (SPPEDGLPGR…ERGAKGESGL (175 aa)) is disordered. Residues 46 to 216 (GLPGRDGRDG…RGAKGESGLA (171 aa)) form the Collagen-like domain. The segment covering 47–65 (LPGRDGRDGREGPRGEKGD) has biased composition (basic and acidic residues). Position 78 is a 4-hydroxyproline (Pro-78). 5-hydroxylysine is present on Lys-87. Asn-90 is a glycosylation site (N-linked (GlcNAc...) asparagine). A 4-hydroxyproline modification is found at Pro-96. Position 99 is a 5-hydroxylysine (Lys-99). The segment covering 139–148 (GPKGGVGAPG) has biased composition (gly residues). A 4-hydroxyproline mark is found at Pro-165 and Pro-171. Positions 165–191 (PGEPGAPGRAGAPGPAGAIGPQGPSGA) are enriched in low complexity. Basic and acidic residues predominate over residues 198–210 (KGDRGTPGERGAK). A coiled-coil region spans residues 217–248 (EVNALRQRVGILEGQLQRLQNAFSQYKKAMLF). The 116-residue stretch at 254–369 (VGEKIFKTEG…GEQRLVICEF (116 aa)) folds into the C-type lectin domain. 2 disulfides stabilise this stretch: Cys-275/Cys-367 and Cys-345/Cys-359.

This sequence belongs to the SFTPD family. As to quaternary structure, oligomeric complex of 4 set of homotrimers. Post-translationally, hydroxylation on proline residues within the sequence motif, GXPG, is most likely to be 4-hydroxy as this fits the requirement for 4-hydroxylation in vertebrates. In terms of processing, S-nitrosylation at Cys-35 and Cys-40 alters the quaternary structure which results in a pro-inflammatory chemoattractive signaling activity with macrophages.

It is found in the secreted. Its subcellular location is the extracellular space. The protein localises to the extracellular matrix. It localises to the surface film. Its function is as follows. Contributes to the lung's defense against inhaled microorganisms, organic antigens and toxins. Interacts with compounds such as bacterial lipopolysaccharides, oligosaccharides and fatty acids and modulates leukocyte action in immune response. May participate in the extracellular reorganization or turnover of pulmonary surfactant. Binds strongly maltose residues and to a lesser extent other alpha-glucosyl moieties. This is Pulmonary surfactant-associated protein D (SFTPD) from Bos taurus (Bovine).